Here is a 201-residue protein sequence, read N- to C-terminus: Holliday junction branch migration complex subunit RuvA (201 aa).

Positions 1–63 are domain I; the sequence is MYAYIKGKLS…EDAQLLYGFM (63 aa). Residues 64 to 142 form a domain II region; sequence SEEEKGMFLS…ITEENPETLL (79 aa). The tract at residues 143–153 is flexible linker; it reads NFEGSESNQTS. The tract at residues 153-201 is domain III; it reads SPILDEALLALEALGYSKRELNKVEKKLQAESYTSVDEAVKAGLKILVS.

Belongs to the RuvA family. Homotetramer. Forms an RuvA(8)-RuvB(12)-Holliday junction (HJ) complex. HJ DNA is sandwiched between 2 RuvA tetramers; dsDNA enters through RuvA and exits via RuvB. An RuvB hexamer assembles on each DNA strand where it exits the tetramer. Each RuvB hexamer is contacted by two RuvA subunits (via domain III) on 2 adjacent RuvB subunits; this complex drives branch migration. In the full resolvosome a probable DNA-RuvA(4)-RuvB(12)-RuvC(2) complex forms which resolves the HJ.

Its subcellular location is the cytoplasm. Functionally, the RuvA-RuvB-RuvC complex processes Holliday junction (HJ) DNA during genetic recombination and DNA repair, while the RuvA-RuvB complex plays an important role in the rescue of blocked DNA replication forks via replication fork reversal (RFR). RuvA specifically binds to HJ cruciform DNA, conferring on it an open structure. The RuvB hexamer acts as an ATP-dependent pump, pulling dsDNA into and through the RuvAB complex. HJ branch migration allows RuvC to scan DNA until it finds its consensus sequence, where it cleaves and resolves the cruciform DNA. This is Holliday junction branch migration complex subunit RuvA from Staphylococcus carnosus (strain TM300).